The following is a 188-amino-acid chain: Probable nicotinate-nucleotide adenylyltransferase (188 aa).

Belongs to the NadD family.

It carries out the reaction nicotinate beta-D-ribonucleotide + ATP + H(+) = deamido-NAD(+) + diphosphate. It functions in the pathway cofactor biosynthesis; NAD(+) biosynthesis; deamido-NAD(+) from nicotinate D-ribonucleotide: step 1/1. In terms of biological role, catalyzes the reversible adenylation of nicotinate mononucleotide (NaMN) to nicotinic acid adenine dinucleotide (NaAD). In Rhizobium meliloti (strain 1021) (Ensifer meliloti), this protein is Probable nicotinate-nucleotide adenylyltransferase.